We begin with the raw amino-acid sequence, 299 residues long: Acetaldehyde dehydrogenase 1 (299 aa).

Cys130 acts as the Acyl-thioester intermediate in catalysis. Residues 161–169 and Asn272 contribute to the NAD(+) site; that span reads SVGPGTRKN.

This sequence belongs to the acetaldehyde dehydrogenase family.

It catalyses the reaction acetaldehyde + NAD(+) + CoA = acetyl-CoA + NADH + H(+). This Burkholderia cenocepacia (strain ATCC BAA-245 / DSM 16553 / LMG 16656 / NCTC 13227 / J2315 / CF5610) (Burkholderia cepacia (strain J2315)) protein is Acetaldehyde dehydrogenase 1 (mhpF).